A 218-amino-acid chain; its full sequence is Dynein axonemal assembly factor 6 (218 aa).

The disordered stretch occupies residues 66-103 (MGPGNIGPPKAKESKAIPEPRSDESENIWNPEEVPEGA). The span at 75–89 (KAKESKAIPEPRSDE) shows a compositional bias: basic and acidic residues.

This sequence belongs to the PIH1 family. Interacts with HSPA1A/B, HSP90AA1 and DNAI2. Interacts with DNAAF2 and DNAAF4. In terms of tissue distribution, specifically expressed in testis. Detected in pachytene spermatocytes from 5 weeks of age and in pachytene and diplotene spermatocytes of adult mice. Not detected in spermatids or mature sperm.

The protein localises to the cytoplasm. It localises to the golgi apparatus. It is found in the trans-Golgi network. Functionally, plays a role in cytoplasmic pre-assembly of axonemal dynein. In Mus musculus (Mouse), this protein is Dynein axonemal assembly factor 6.